A 250-amino-acid polypeptide reads, in one-letter code: MQVTVRDLDGDDAGTLDLPRVFEEPVRPDLVKRAVLAAQANRTQEYGADEYAGLRTTAESQGSGRGMAHVPKANGQGARVPQTVGGRKAHPPKAEKDHGLDVNDKERKAAVRAAVAATTDSELVADRGHNFDDDVEFPLVVSDDFEDLVKTQDVVSLLEALGVHADIERADEGRTVRAGQGTLRGRKYQEPTSILFVTASESGPSTAARNLAGVDVATGREVNAEDLAPGAEPGRLTVWTESAVEEVAQR.

2 disordered regions span residues 1-20 and 51-101; these read MQVTVRDLDGDDAGTLDLPR and YAGL…HGLD. A compositionally biased stretch (basic and acidic residues) spans 92-101; it reads PKAEKDHGLD.

Belongs to the universal ribosomal protein uL4 family. As to quaternary structure, part of the 50S ribosomal subunit.

Functionally, one of the primary rRNA binding proteins, this protein initially binds near the 5'-end of the 23S rRNA. It is important during the early stages of 50S assembly. It makes multiple contacts with different domains of the 23S rRNA in the assembled 50S subunit and ribosome. Its function is as follows. Forms part of the polypeptide exit tunnel. In Halobacterium salinarum (strain ATCC 29341 / DSM 671 / R1), this protein is Large ribosomal subunit protein uL4.